A 530-amino-acid polypeptide reads, in one-letter code: Light-independent protochlorophyllide reductase subunit B (530 aa).

Residue Asp36 coordinates [4Fe-4S] cluster. Asp290 (proton donor) is an active-site residue. 425–426 (GL) provides a ligand contact to substrate.

This sequence belongs to the ChlB/BchB/BchZ family. Protochlorophyllide reductase is composed of three subunits; ChlL, ChlN and ChlB. Forms a heterotetramer of two ChlB and two ChlN subunits. Requires [4Fe-4S] cluster as cofactor.

The enzyme catalyses chlorophyllide a + oxidized 2[4Fe-4S]-[ferredoxin] + 2 ADP + 2 phosphate = protochlorophyllide a + reduced 2[4Fe-4S]-[ferredoxin] + 2 ATP + 2 H2O. The protein operates within porphyrin-containing compound metabolism; chlorophyll biosynthesis (light-independent). Its function is as follows. Component of the dark-operative protochlorophyllide reductase (DPOR) that uses Mg-ATP and reduced ferredoxin to reduce ring D of protochlorophyllide (Pchlide) to form chlorophyllide a (Chlide). This reaction is light-independent. The NB-protein (ChlN-ChlB) is the catalytic component of the complex. This is Light-independent protochlorophyllide reductase subunit B from Synechococcus sp. (strain WH7803).